A 282-amino-acid chain; its full sequence is NADPH-dependent 7-cyano-7-deazaguanine reductase (282 aa).

Ile-82–Ser-84 contacts substrate. Ser-84–Lys-85 contacts NADPH. Cys-189 acts as the Thioimide intermediate in catalysis. Asp-196 functions as the Proton donor in the catalytic mechanism. Substrate is bound at residue His-228–Glu-229. Arg-257–Gly-258 provides a ligand contact to NADPH.

Belongs to the GTP cyclohydrolase I family. QueF type 2 subfamily. Homodimer.

The protein resides in the cytoplasm. It catalyses the reaction 7-aminomethyl-7-carbaguanine + 2 NADP(+) = 7-cyano-7-deazaguanine + 2 NADPH + 3 H(+). Its pathway is tRNA modification; tRNA-queuosine biosynthesis. In terms of biological role, catalyzes the NADPH-dependent reduction of 7-cyano-7-deazaguanine (preQ0) to 7-aminomethyl-7-deazaguanine (preQ1). The polypeptide is NADPH-dependent 7-cyano-7-deazaguanine reductase (Delftia acidovorans (strain DSM 14801 / SPH-1)).